A 271-amino-acid polypeptide reads, in one-letter code: MKKITIRDILKMKGKKKIVMVTAYDYPFAKLVDEAGVDIILVGDSAGMVVHGLPSTIPVTMDMMLLHVSSVARAKPRALIVGDMPFLSYEVSIEEAVRNAGLMLKSGAEAVKIEGGSEMVDVIKALVRAGIPVMGHIGLTPQRYLLLGGYRRRGVKEYEAEKIIEDAKELEKAGVFSIVIEFTAADIAEEITKEVSVPTICIGSGPYCDGQVLVLHDLLGIYEEIPPFAKKYADLRRIVIDSVKKYAEEVRNGVFPERKHYFFSKRREAEK.

D44 and D83 together coordinate Mg(2+). 3-methyl-2-oxobutanoate-binding positions include 44-45 (DS), D83, and K112. E114 lines the Mg(2+) pocket. The active-site Proton acceptor is E181.

It belongs to the PanB family. Homodecamer; pentamer of dimers. It depends on Mg(2+) as a cofactor.

It localises to the cytoplasm. It catalyses the reaction 3-methyl-2-oxobutanoate + (6R)-5,10-methylene-5,6,7,8-tetrahydrofolate + H2O = 2-dehydropantoate + (6S)-5,6,7,8-tetrahydrofolate. It functions in the pathway cofactor biosynthesis; coenzyme A biosynthesis. Its function is as follows. Catalyzes the reversible reaction in which hydroxymethyl group from 5,10-methylenetetrahydrofolate is transferred onto alpha-ketoisovalerate to form ketopantoate. This Staphylothermus marinus (strain ATCC 43588 / DSM 3639 / JCM 9404 / F1) protein is 3-methyl-2-oxobutanoate hydroxymethyltransferase.